The following is a 1412-amino-acid chain: Probable phosphatidylinositol 4-kinase STT4 homolog (1412 aa).

The region spanning 878–1055 is the PIK helical domain; the sequence is SMETNGFYRF…GTFVRCIEEI (178 aa). Residues 1056–1163 form a pleckstrin homology (PH) domain conferring phosphoinositide binding specificity region; it reads MKEMPDGSRD…ISIKQLIFKS (108 aa). The 270-residue stretch at 1127 to 1396 folds into the PI3K/PI4K catalytic domain; it reads NGSARALQSH…LIAESSQKFR (270 aa). The tract at residues 1133–1139 is G-loop; the sequence is LQSHSKV. Positions 1266 to 1274 are catalytic loop; it reads NIKDRHNGN. The tract at residues 1285–1308 is activation loop; that stretch reads HIDFGYMLEMSPGNLNIEAPLKLT.

It belongs to the PI3/PI4-kinase family. Type III PI4K subfamily.

It is found in the cytoplasm. The enzyme catalyses a 1,2-diacyl-sn-glycero-3-phospho-(1D-myo-inositol) + ATP = a 1,2-diacyl-sn-glycero-3-phospho-(1D-myo-inositol 4-phosphate) + ADP + H(+). Its function is as follows. Acts on phosphatidylinositol (PI) in the first committed step in the production of the second messenger inositol 1,4,5,-trisphosphate. This Encephalitozoon cuniculi (strain GB-M1) (Microsporidian parasite) protein is Probable phosphatidylinositol 4-kinase STT4 homolog (STT4).